Consider the following 191-residue polypeptide: MSIENLHIADETEIPAGATVELHSRPERKARKALEGLGLKRVQGIQRVTLRRARNVLLVVSSPEVYKSPGSDCYIVFGEAKVEDPNSAAQLQAQAQLAASSQAAQQAHAHGGFKEGVPKSLEELMQDAPSADSSAPAPSGEATDASASGDFKVSDEEIQLIVAQTGVDEAKAREAYISEKGDLINAIMKLQ.

The 66-residue stretch at 24 to 89 (SRPERKARKA…AKVEDPNSAA (66 aa)) folds into the NAC-A/B domain. The tract at residues 126–149 (QDAPSADSSAPAPSGEATDASASG) is disordered. Residues 127–139 (DAPSADSSAPAPS) are compositionally biased toward low complexity. In terms of domain architecture, UBA spans 153-191 (VSDEEIQLIVAQTGVDEAKAREAYISEKGDLINAIMKLQ).

It belongs to the NAC-alpha family. As to quaternary structure, part of the nascent polypeptide-associated complex (NAC), consisting of EGD2 and EGD1. NAC associates with ribosomes via EGD1.

The protein resides in the cytoplasm. The protein localises to the nucleus. Component of the nascent polypeptide-associated complex (NAC), a dynamic component of the ribosomal exit tunnel, protecting the emerging polypeptides from interaction with other cytoplasmic proteins to ensure appropriate nascent protein targeting. The NAC complex also promotes mitochondrial protein import by enhancing productive ribosome interactions with the outer mitochondrial membrane and blocks the inappropriate interaction of ribosomes translating non-secretory nascent polypeptides with translocation sites in the membrane of the endoplasmic reticulum. EGD2 may also be involved in transcription regulation. The chain is Nascent polypeptide-associated complex subunit alpha (EGD2) from Cryptococcus neoformans var. neoformans serotype D (strain B-3501A) (Filobasidiella neoformans).